A 596-amino-acid chain; its full sequence is Elongation factor 4 (596 aa).

The tr-type G domain maps to 2-184; sequence KHIRNFSIIA…VIVAQIPPPE (183 aa). GTP-binding positions include 14 to 19 and 131 to 134; these read DHGKST and NKID.

This sequence belongs to the TRAFAC class translation factor GTPase superfamily. Classic translation factor GTPase family. LepA subfamily.

The protein resides in the cell inner membrane. The catalysed reaction is GTP + H2O = GDP + phosphate + H(+). Its function is as follows. Required for accurate and efficient protein synthesis under certain stress conditions. May act as a fidelity factor of the translation reaction, by catalyzing a one-codon backward translocation of tRNAs on improperly translocated ribosomes. Back-translocation proceeds from a post-translocation (POST) complex to a pre-translocation (PRE) complex, thus giving elongation factor G a second chance to translocate the tRNAs correctly. Binds to ribosomes in a GTP-dependent manner. The protein is Elongation factor 4 of Shewanella halifaxensis (strain HAW-EB4).